A 265-amino-acid polypeptide reads, in one-letter code: ITHLIVCTTSVDMPGADYQLTKLLGLRPYVKRYMMYQQGCFAGGTVLRLAKDLAENNKGARVLVVCSEVTAVTFRGPSDTHLDSLVGQALFGDGAAALIVGSDPVPEIEKPIFEMVWTAQTIAPDSEGAIDGHLREAGLTFHLLKDVPGIVSKNINKALVEAFEPLGISDYNSIFWIAHPGGPAILDQVEQKLALKPEKMKATREVLSEYGNMSSACVLFILDEMRKKSAQDGLKTTGEGLEWGVLFGFGPGLTIETVVLRSVTI.

Cysteine 40 is a catalytic residue.

Belongs to the thiolase-like superfamily. Chalcone/stilbene synthases family.

It catalyses the reaction (E)-4-coumaroyl-CoA + 3 malonyl-CoA + 3 H(+) = 2',4,4',6'-tetrahydroxychalcone + 3 CO2 + 4 CoA. It functions in the pathway secondary metabolite biosynthesis; flavonoid biosynthesis. Its function is as follows. The primary product of this enzyme is 4,2',4',6'-tetrahydroxychalcone (also termed naringenin-chalcone or chalcone) which can under specific conditions spontaneously isomerize into naringenin. This chain is Chalcone synthase (CHSII), found in Medicago sativa (Alfalfa).